The following is a 174-amino-acid chain: MIDSDGFRANVGIIICNRFGQVMWARRFGQHSWQFPQGGVDEGESAEQAMYRELYEEVGLRPEHVQVLTSTRSWLRYRLPKRLIRQDSKPLCIGQKQKWFLLQLKSQESAIDLAASGHPEFDDWRWVSYWYPVRQVVSFKRDVYRKVMKEFAPTALPFQAQENTQGGRRRGRRR.

The Nudix hydrolase domain maps to Gly-6–Lys-149. Residues Gly-38–Gly-59 carry the Nudix box motif.

Belongs to the Nudix hydrolase family. RppH subfamily. Requires a divalent metal cation as cofactor.

Functionally, accelerates the degradation of transcripts by removing pyrophosphate from the 5'-end of triphosphorylated RNA, leading to a more labile monophosphorylated state that can stimulate subsequent ribonuclease cleavage. The chain is RNA pyrophosphohydrolase from Shewanella loihica (strain ATCC BAA-1088 / PV-4).